A 71-amino-acid polypeptide reads, in one-letter code: uncharacterized protein (71 aa).

Residues 23-71 are disordered; the sequence is ENEKAGQSEEYDDDDKEENKKRRRNNGRRGPPEKKKSRRGGEEQTQRII. Positions 52 to 71 are enriched in basic and acidic residues; the sequence is GPPEKKKSRRGGEEQTQRII.

This is an uncharacterized protein from Caenorhabditis elegans.